The chain runs to 161 residues: Protein PLANT CADMIUM RESISTANCE 12 (161 aa).

Residues 71–89 (AGLIHLALGFIGCSWLYAF) form a helical membrane-spanning segment.

The protein belongs to the cornifelin family.

It is found in the membrane. Functionally, may be involved in heavy metals transport. In Arabidopsis thaliana (Mouse-ear cress), this protein is Protein PLANT CADMIUM RESISTANCE 12 (PCR12).